Here is a 469-residue protein sequence, read N- to C-terminus: MSVTVEVADEETHDVPLVEQVRTTPDQNVDVKVQENNVVTTKIGPKLETIPAAKMQDDNGDEEKAENSEGAAAEKVEKQHDDDGVVVHEETDGVASSRSSHHDKQKPGETKKSGDGKMDDDDIITTARSSSRRICGSAASSSDSETADDAPLLPDEGPSHAVRLEMPGDKPASPHDRFPKTPLKTLVAFLMLVVAAAGNTITLSWIHERYPLTPPLPDIVFELIPKIPWGLRLCENLMIGSFVSLLVLILFHRHRWIVLRRLCFIGSILYGMRCITMMVTPVPKADEDFECSPRFGENATFSLIVMRGVWSMFGLGLNLFDNQKVVLCGDYIYSGHTLVLVVSALFIGEYSPRRFYILHWLSWLVCSVGVIFLVLSHGHYTIDVILSYFACTRVFWAYHTQAAHPSIRLSVQNHQAKEFWFPLLRWFEGDIRRPVPRRFDCPISYSQVCNAFRRVRPRGRNGAARPAFE.

Positions 40-177 (TTKIGPKLET…GDKPASPHDR (138 aa)) are disordered. Basic and acidic residues-rich tracts occupy residues 72-91 (AAEK…HEET), 100-117 (SHHD…GDGK), and 162-177 (VRLE…PHDR). 6 helical membrane-spanning segments follow: residues 186–206 (LVAF…LSWI), 231–251 (LRLC…LILF), 262–282 (LCFI…VTPV), 300–320 (TFSL…LNLF), 327–347 (LCGD…ALFI), and 355–375 (FYIL…FLVL). His-336 is an active-site residue. Topologically, residues 376–469 (SHGHYTIDVI…RNGAARPAFE (94 aa)) are cytoplasmic. Residues His-379 and Asp-383 contribute to the active site.

Belongs to the sphingomyelin synthase family.

It localises to the golgi apparatus membrane. It catalyses the reaction an N-acylsphing-4-enine + a 1,2-diacyl-sn-glycero-3-phosphocholine = a sphingomyelin + a 1,2-diacyl-sn-glycerol. The enzyme catalyses an N-acyl-15-methylhexadecasphing-4-enine + a 1,2-diacyl-sn-glycero-3-phosphocholine = an N-acyl-15-methylhexadecasphing-4-enine-1-phosphocholine + a 1,2-diacyl-sn-glycerol. Its pathway is lipid metabolism; sphingolipid metabolism. Its function is as follows. Sphingomyelin synthases (SM synthase or SMS) synthesize the sphingolipid sphingomyelin (SM) through transfer of the phosphatidyl head group of 1,2-diacyl-sn-glycero-3-phosphocholine (phosphatidylcholine, PC) on to the primary hydroxyl of ceramide (N-acylsphingoid base), yielding 1,2-diacyl-sn-glycerol (diacylglycerol, DAG) as a side product. Functions as a bidirectional lipid cholinephosphotransferases capable of converting PC and ceramide to SM and DAG and vice versa depending on the respective levels of ceramide and DAG as phosphocholine acceptors, respectively. The protein is Phosphatidylcholine:ceramide cholinephosphotransferase 1 (sms-1) of Caenorhabditis elegans.